A 293-amino-acid chain; its full sequence is Diaminopimelate epimerase (293 aa).

3 residues coordinate substrate: Asn15, Gln47, and Asn67. Catalysis depends on Cys76, which acts as the Proton donor. Substrate-binding positions include Gly77–Asn78, Asn163, Asn197, and Glu215–Arg216. The active-site Proton acceptor is Cys224. Position 225 to 226 (Gly225 to Ser226) interacts with substrate.

It belongs to the diaminopimelate epimerase family. Homodimer.

The protein resides in the cytoplasm. The catalysed reaction is (2S,6S)-2,6-diaminopimelate = meso-2,6-diaminopimelate. Its pathway is amino-acid biosynthesis; L-lysine biosynthesis via DAP pathway; DL-2,6-diaminopimelate from LL-2,6-diaminopimelate: step 1/1. In terms of biological role, catalyzes the stereoinversion of LL-2,6-diaminopimelate (L,L-DAP) to meso-diaminopimelate (meso-DAP), a precursor of L-lysine and an essential component of the bacterial peptidoglycan. The chain is Diaminopimelate epimerase from Chelativorans sp. (strain BNC1).